The following is a 214-amino-acid chain: Probable adenylyl-sulfate kinase (214 aa).

13–20 (GLSGAGKT) contacts ATP. Catalysis depends on Ser-87, which acts as the Phosphoserine intermediate. Residues 174–199 (WNRTNTFPLKSRPNPPHRHKSKSSRA) form a disordered region.

It belongs to the APS kinase family.

It carries out the reaction adenosine 5'-phosphosulfate + ATP = 3'-phosphoadenylyl sulfate + ADP + H(+). It participates in sulfur metabolism; hydrogen sulfide biosynthesis; sulfite from sulfate: step 2/3. Its function is as follows. Catalyzes the synthesis of activated sulfate. In Pseudomonas aeruginosa, this protein is Probable adenylyl-sulfate kinase.